The following is a 341-amino-acid chain: tRNA N6-adenosine threonylcarbamoyltransferase (341 aa).

Residues His111 and His115 each contribute to the Fe cation site. Substrate-binding positions include 134 to 138, Asp167, Gly180, and Asn276; that span reads LVSGG. Asp304 contacts Fe cation.

It belongs to the KAE1 / TsaD family. Fe(2+) is required as a cofactor.

The protein localises to the cytoplasm. The enzyme catalyses L-threonylcarbamoyladenylate + adenosine(37) in tRNA = N(6)-L-threonylcarbamoyladenosine(37) in tRNA + AMP + H(+). Its function is as follows. Required for the formation of a threonylcarbamoyl group on adenosine at position 37 (t(6)A37) in tRNAs that read codons beginning with adenine. Is involved in the transfer of the threonylcarbamoyl moiety of threonylcarbamoyl-AMP (TC-AMP) to the N6 group of A37, together with TsaE and TsaB. TsaD likely plays a direct catalytic role in this reaction. This is tRNA N6-adenosine threonylcarbamoyltransferase from Pseudomonas aeruginosa (strain LESB58).